A 297-amino-acid chain; its full sequence is PIH1 domain-containing protein 1 (297 aa).

The protein belongs to the PIH1 family.

Its subcellular location is the nucleus. Functionally, involved in the assembly of C/D box small nucleolar ribonucleoprotein (snoRNP) particles. Recruits the SWI/SNF complex to the core promoter of rRNA genes and enhances pre-rRNA transcription. Mediates interaction of TELO2 with the R2TP complex which is necessary for the stability of MTOR and SMG1. Positively regulates the assembly and activity of the mTORC1 complex. In Xenopus laevis (African clawed frog), this protein is PIH1 domain-containing protein 1 (pih1d1).